The primary structure comprises 130 residues: Blasticidin-S deaminase (130 aa).

In terms of domain architecture, CMP/dCMP-type deaminase spans 1 to 129 (MPLSQEESTL…ELLPSGYVWE (129 aa)). Substrate is bound at residue Ser-28. Position 54 (Cys-54) interacts with Zn(2+). Residue Glu-56 is the Proton donor of the active site. Position 82 (Arg-82) interacts with substrate. Zn(2+)-binding residues include Cys-88 and Cys-91. 2 residues coordinate substrate: Tyr-126 and Trp-128.

The protein belongs to the cytidine and deoxycytidylate deaminase family. In terms of assembly, homotetramer. The cofactor is Zn(2+).

The enzyme catalyses blasticidin S + H2O + H(+) = deaminohydroxyblasticidin S + NH4(+). Catalyzes the deamination of the cytosine moiety of the antibiotics blasticidin S, cytomycin and acetylblasticidin S. This Aspergillus terreus protein is Blasticidin-S deaminase (bsd).